Here is a 460-residue protein sequence, read N- to C-terminus: Serine--tRNA ligase (460 aa).

The span at 43–66 (AEGDGLRQERNEVSSKIGELKQDG) shows a compositional bias: basic and acidic residues. Residues 43-81 (AEGDGLRQERNEVSSKIGELKQDGKDEEAQEAIDRSQEL) are disordered. 242-244 (TAE) contacts L-serine. Residues 273-275 (RRE) and Val-289 contribute to the ATP site. Residue Glu-296 participates in L-serine binding. An ATP-binding site is contributed by 369 to 372 (EVSS). Ser-405 contributes to the L-serine binding site.

This sequence belongs to the class-II aminoacyl-tRNA synthetase family. Type-1 seryl-tRNA synthetase subfamily. As to quaternary structure, homodimer. The tRNA molecule binds across the dimer.

The protein resides in the cytoplasm. It carries out the reaction tRNA(Ser) + L-serine + ATP = L-seryl-tRNA(Ser) + AMP + diphosphate + H(+). The enzyme catalyses tRNA(Sec) + L-serine + ATP = L-seryl-tRNA(Sec) + AMP + diphosphate + H(+). It participates in aminoacyl-tRNA biosynthesis; selenocysteinyl-tRNA(Sec) biosynthesis; L-seryl-tRNA(Sec) from L-serine and tRNA(Sec): step 1/1. In terms of biological role, catalyzes the attachment of serine to tRNA(Ser). Is also probably able to aminoacylate tRNA(Sec) with serine, to form the misacylated tRNA L-seryl-tRNA(Sec), which will be further converted into selenocysteinyl-tRNA(Sec). The protein is Serine--tRNA ligase (serS) of Haloarcula marismortui (strain ATCC 43049 / DSM 3752 / JCM 8966 / VKM B-1809) (Halobacterium marismortui).